The chain runs to 522 residues: Tetratricopeptide repeat and J domain-containing co-chaperone DNJ1 (522 aa).

Positions 1 to 22 are cleaved as a signal peptide; that stretch reads MKGFLLVALPVLFLSLSTQVFG. TPR repeat units follow at residues 29 to 62, 63 to 96, 97 to 130, 142 to 175, 210 to 243, 256 to 289, and 356 to 389; these read AAQI…DPTG, YANY…NPGF, VQAH…KSDS, GEAA…GPNS, TYLP…DPDS, LEKD…LVRF, and VDSW…SGRS. Positions 410 to 471 constitute a J domain; that stretch reads DYYKVLGVPR…ELRQRYDNGD (62 aa). Residues 465–494 are disordered; that stretch reads QRYDNGDDPNDPTGGQQHNPFAHHGGGMPF.

It is found in the endoplasmic reticulum lumen. Functionally, endoplasmic reticulum co-chaperone crucial for survival and virulence factor production at elevated temperatures representative of febrile patients during infection. Contributes to virulence in a mouse model of cryptococcosis. With chaperone CNE1, coordinately maintains ER homeostasis and contributes to maintenance of cell wall architecture. The polypeptide is Tetratricopeptide repeat and J domain-containing co-chaperone DNJ1 (Cryptococcus neoformans var. grubii serotype A (strain H99 / ATCC 208821 / CBS 10515 / FGSC 9487) (Filobasidiella neoformans var. grubii)).